A 354-amino-acid polypeptide reads, in one-letter code: Type II methylase M.HgiDII (354 aa).

The SAM-dependent MTase C5-type domain occupies 3 to 344; sequence GAVIDLFCGV…KSIKRFLEGL (342 aa). Cys-79 is an active-site residue.

Belongs to the class I-like SAM-binding methyltransferase superfamily. C5-methyltransferase family.

The catalysed reaction is a 2'-deoxycytidine in DNA + S-adenosyl-L-methionine = a 5-methyl-2'-deoxycytidine in DNA + S-adenosyl-L-homocysteine + H(+). Its function is as follows. A methylase that recognizes the double-stranded sequence 5'-GTCGAC-3', methylates C-? on both strands and protects the DNA from cleavage by the HgiDII endonuclease. In Herpetosiphon aurantiacus (Herpetosiphon giganteus), this protein is Type II methylase M.HgiDII.